A 309-amino-acid polypeptide reads, in one-letter code: Isoflavone reductase homolog IRL (309 aa).

NADP(+)-binding positions include 12 to 18 (GGTGYLG), arginine 37, and lysine 46. The Proton acceptor role is filled by lysine 134. Arginine 138 contacts NADP(+).

Belongs to the NmrA-type oxidoreductase family. Isoflavone reductase subfamily. Monomer.

It localises to the cytoplasm. The protein operates within alkaloid biosynthesis. In terms of biological role, reductase that may be involved in a late step of alkaloid biosynthesis. The polypeptide is Isoflavone reductase homolog IRL (Zea mays (Maize)).